Reading from the N-terminus, the 487-residue chain is N-succinylglutamate 5-semialdehyde dehydrogenase (487 aa).

Position 221 to 226 (221 to 226 (GSSDTG)) interacts with NAD(+). Residues glutamate 244 and cysteine 278 contribute to the active site.

Belongs to the aldehyde dehydrogenase family. AstD subfamily.

It catalyses the reaction N-succinyl-L-glutamate 5-semialdehyde + NAD(+) + H2O = N-succinyl-L-glutamate + NADH + 2 H(+). Its pathway is amino-acid degradation; L-arginine degradation via AST pathway; L-glutamate and succinate from L-arginine: step 4/5. Functionally, catalyzes the NAD-dependent reduction of succinylglutamate semialdehyde into succinylglutamate. The polypeptide is N-succinylglutamate 5-semialdehyde dehydrogenase (Paraburkholderia xenovorans (strain LB400)).